The primary structure comprises 325 residues: Lipoyl synthase (325 aa).

Residues cysteine 71, cysteine 76, cysteine 82, cysteine 97, cysteine 101, cysteine 104, and serine 311 each contribute to the [4Fe-4S] cluster site. The Radical SAM core domain maps to 83 to 300 (FSGGTATFMI…ERQALAMGFT (218 aa)).

It belongs to the radical SAM superfamily. Lipoyl synthase family. The cofactor is [4Fe-4S] cluster.

The protein resides in the cytoplasm. It catalyses the reaction [[Fe-S] cluster scaffold protein carrying a second [4Fe-4S](2+) cluster] + N(6)-octanoyl-L-lysyl-[protein] + 2 oxidized [2Fe-2S]-[ferredoxin] + 2 S-adenosyl-L-methionine + 4 H(+) = [[Fe-S] cluster scaffold protein] + N(6)-[(R)-dihydrolipoyl]-L-lysyl-[protein] + 4 Fe(3+) + 2 hydrogen sulfide + 2 5'-deoxyadenosine + 2 L-methionine + 2 reduced [2Fe-2S]-[ferredoxin]. It participates in protein modification; protein lipoylation via endogenous pathway; protein N(6)-(lipoyl)lysine from octanoyl-[acyl-carrier-protein]: step 2/2. Catalyzes the radical-mediated insertion of two sulfur atoms into the C-6 and C-8 positions of the octanoyl moiety bound to the lipoyl domains of lipoate-dependent enzymes, thereby converting the octanoylated domains into lipoylated derivatives. This chain is Lipoyl synthase, found in Methylobacillus flagellatus (strain ATCC 51484 / DSM 6875 / VKM B-1610 / KT).